We begin with the raw amino-acid sequence, 79 residues long: D-alanyl carrier protein (79 aa).

The Carrier domain occupies 1-77 (MDTKQAVLDI…KIIAKVESLR (77 aa)). The residue at position 35 (Ser35) is an O-(pantetheine 4'-phosphoryl)serine.

Belongs to the DltC family. Post-translationally, 4'-phosphopantetheine is transferred from CoA to a specific serine of apo-DCP.

It is found in the cytoplasm. Its pathway is cell wall biogenesis; lipoteichoic acid biosynthesis. Carrier protein involved in the D-alanylation of lipoteichoic acid (LTA). The loading of thioester-linked D-alanine onto DltC is catalyzed by D-alanine--D-alanyl carrier protein ligase DltA. The DltC-carried D-alanyl group is further transferred to cell membrane phosphatidylglycerol (PG) by forming an ester bond, probably catalyzed by DltD. D-alanylation of LTA plays an important role in modulating the properties of the cell wall in Gram-positive bacteria, influencing the net charge of the cell wall. This is D-alanyl carrier protein from Lactobacillus gasseri (strain ATCC 33323 / DSM 20243 / BCRC 14619 / CIP 102991 / JCM 1131 / KCTC 3163 / NCIMB 11718 / NCTC 13722 / AM63).